The chain runs to 538 residues: Solute carrier family 2, facilitated glucose transporter member 9 (538 aa).

At 1 to 34 (MDSRELALASLMCDTGGPGELSVGHQQRRTKKWS) the chain is on the cytoplasmic side. Ser-3 bears the Phosphoserine mark. A helical membrane pass occupies residues 35 to 54 (FSLVVAALVGAFGSSFLYGY). N-linked (GlcNAc...) asparagine glycosylation is found at Asn-55 and Asn-71. The Extracellular segment spans residues 55 to 88 (NLSVVNAPTPYIKAFYNGTWYRRHGQPIDPDTLT). A helical transmembrane segment spans residues 89-109 (LLWSVTVSIFAIGGLVGTLMV). Residues 110–120 (KMIGKFLGRKS) are Cytoplasmic-facing. A helical transmembrane segment spans residues 121 to 143 (TLLVNNGFAISAALLMACSLRAG). The Extracellular segment spans residues 144 to 148 (TFEML). Residues 149 to 170 (IVGRFIMGVDGGIALSALPMYL) form a helical membrane-spanning segment. Over 171–181 (NEISPKEIRGS) the chain is Cytoplasmic. A helical transmembrane segment spans residues 182–200 (LGQVTAIFICIGVFSGQLL). The Extracellular segment spans residues 201-211 (GLPELLGREST). The chain crosses the membrane as a helical span at residues 212-233 (WPYLFGVIIVPALVQLASLPFL). Topologically, residues 234–297 (PESPRYLLFE…LLRAPFVRWQ (64 aa)) are cytoplasmic. Residues 298–319 (VITVIITMASYQLCGLNAIWFY) traverse the membrane as a helical segment. At 320–333 (TNSIFGKAGIPQDK) the chain is on the extracellular side. The chain crosses the membrane as a helical span at residues 334–356 (IPYITLSTGGIETLAAIFSGLVI). At 357–362 (ERLGRR) the chain is on the cytoplasmic side. A helical membrane pass occupies residues 363–385 (PLLIGGFGLMALFFGTLTATLTL). Residues 386-390 (QDQAP) lie on the Extracellular side of the membrane. The chain crosses the membrane as a helical span at residues 391–418 (WVPYLSIVCILAIIASFCSGPGGIPFIL). Topologically, residues 419-429 (TGEFFQQSERP) are cytoplasmic. A helical transmembrane segment spans residues 430–453 (AAFMIAGTVNWLSNFAVGLLFPFI). Residues 454-458 (QKSLD) are Extracellular-facing. A helical transmembrane segment spans residues 459 to 480 (SYCFLVFATICIAGATYFYFVL). Residues 481–538 (PETKNRTHAEISQAFAKRNKAQPPEVKADSAMTEEKANSQTEPDSSSTLDSYGQNKIV) lie on the Cytoplasmic side of the membrane. Residues 495–538 (FAKRNKAQPPEVKADSAMTEEKANSQTEPDSSSTLDSYGQNKIV) are disordered. Positions 518–538 (NSQTEPDSSSTLDSYGQNKIV) are enriched in polar residues.

Belongs to the major facilitator superfamily. Sugar transporter (TC 2.A.1.1) family. Post-translationally, N-glycosylated. As to expression, highly expressed in the intestine, with high expression in the jejunum and ileum, the segments of the intestine that perform the majority of urate excretion. Isoform 1: Widely expressed. Isoform 1: In kidney, expressed at low levels in proximal tubules. Isoform 2: Primarily expressed in liver and kidney; with specific expression in distal convoluted and connecting tubules of kidney.

It is found in the basolateral cell membrane. Its subcellular location is the apical cell membrane. It carries out the reaction urate(out) = urate(in). Its function is as follows. High-capacity urate transporter, which may play a role in the urate reabsorption by proximal tubules. May have a residual high-affinity, low-capacity glucose and fructose transporter activity. Transports urate at rates 45- to 60-fold faster than glucose. Does not transport galactose. May mediate small uptake of adenine but not of other nucleobases. This Mus musculus (Mouse) protein is Solute carrier family 2, facilitated glucose transporter member 9.